The chain runs to 462 residues: Sodium-coupled neutral amino acid transporter 7 (462 aa).

Ser28 is modified (phosphoserine). 11 helical membrane-spanning segments follow: residues 56 to 76 (AIFI…PAAF), 82 to 102 (VAAG…GLVI), 130 to 150 (LCEV…LIII), 178 to 198 (FTIS…REIG), 205 to 225 (FLSV…YIWP), 239 to 259 (ASWM…QCHV), 282 to 302 (AAMV…FLTF), 319 to 339 (MAVA…YPIL), 371 to 391 (VLQT…IPDI), 395 to 415 (ISVI…LCLI), and 428 to 448 (ASWW…AFIF).

It belongs to the amino acid/polyamine transporter 2 family. As to quaternary structure, interacts with the mTORC1 complex; this interaction mediates the recruitment of mTORC1 to the lysosome and its subsequent activation.

It is found in the lysosome membrane. It localises to the cell projection. The protein localises to the axon. The catalysed reaction is L-asparagine(in) + Na(+)(in) = L-asparagine(out) + Na(+)(out). It carries out the reaction L-glutamine(in) + Na(+)(in) = L-glutamine(out) + Na(+)(out). Functionally, symporter that selectively cotransports sodium ions and amino acids, such as L-glutamine and L-asparagine from the lysosome into the cytoplasm and may participates in mTORC1 activation. The transport activity requires an acidic lysosomal lumen. The protein is Sodium-coupled neutral amino acid transporter 7 of Homo sapiens (Human).